The following is a 297-amino-acid chain: Probable oxidoreductase (297 aa).

Residue 9–33 (VVTGGASGLGAETVRALAAAGAEVT) participates in NAD(+) binding. Ser-138 contributes to the substrate binding site. Residue Tyr-164 is the Proton acceptor of the active site.

This sequence belongs to the short-chain dehydrogenases/reductases (SDR) family.

The polypeptide is Probable oxidoreductase (Streptomyces lividans).